Consider the following 417-residue polypeptide: Imidazolonepropionase (417 aa).

2 residues coordinate Fe(3+): H77 and H79. The Zn(2+) site is built by H77 and H79. The 4-imidazolone-5-propanoate site is built by R86, Y149, and H182. Y149 provides a ligand contact to N-formimidoyl-L-glutamate. Fe(3+) is bound at residue H247. H247 lines the Zn(2+) pocket. Q250 provides a ligand contact to 4-imidazolone-5-propanoate. D322 contacts Fe(3+). D322 is a binding site for Zn(2+). The N-formimidoyl-L-glutamate site is built by N324 and G326. A 4-imidazolone-5-propanoate-binding site is contributed by T327.

This sequence belongs to the metallo-dependent hydrolases superfamily. HutI family. Requires Zn(2+) as cofactor. Fe(3+) serves as cofactor.

It localises to the cytoplasm. It catalyses the reaction 4-imidazolone-5-propanoate + H2O = N-formimidoyl-L-glutamate. The protein operates within amino-acid degradation; L-histidine degradation into L-glutamate; N-formimidoyl-L-glutamate from L-histidine: step 3/3. Its function is as follows. Catalyzes the hydrolytic cleavage of the carbon-nitrogen bond in imidazolone-5-propanoate to yield N-formimidoyl-L-glutamate. It is the third step in the universal histidine degradation pathway. The chain is Imidazolonepropionase from Cupriavidus necator (strain ATCC 17699 / DSM 428 / KCTC 22496 / NCIMB 10442 / H16 / Stanier 337) (Ralstonia eutropha).